Reading from the N-terminus, the 475-residue chain is tRNA modification GTPase MnmE (475 aa).

Residues arginine 24, glutamate 81, and lysine 124 each coordinate (6S)-5-formyl-5,6,7,8-tetrahydrofolate. The 178-residue stretch at glycine 220 to glycine 397 folds into the TrmE-type G domain. Asparagine 230 provides a ligand contact to K(+). GTP-binding positions include asparagine 230–serine 235, threonine 249–threonine 255, aspartate 274–glycine 277, and serine 378–arginine 380. Residue serine 234 coordinates Mg(2+). Residues threonine 249, isoleucine 251, and threonine 254 each contribute to the K(+) site. Mg(2+) is bound at residue threonine 255. Lysine 475 is a binding site for (6S)-5-formyl-5,6,7,8-tetrahydrofolate.

The protein belongs to the TRAFAC class TrmE-Era-EngA-EngB-Septin-like GTPase superfamily. TrmE GTPase family. In terms of assembly, homodimer. Heterotetramer of two MnmE and two MnmG subunits. K(+) is required as a cofactor.

The protein resides in the cytoplasm. Functionally, exhibits a very high intrinsic GTPase hydrolysis rate. Involved in the addition of a carboxymethylaminomethyl (cmnm) group at the wobble position (U34) of certain tRNAs, forming tRNA-cmnm(5)s(2)U34. The chain is tRNA modification GTPase MnmE from Cupriavidus necator (strain ATCC 17699 / DSM 428 / KCTC 22496 / NCIMB 10442 / H16 / Stanier 337) (Ralstonia eutropha).